The primary structure comprises 725 residues: Homeobox protein unc-62 (725 aa).

Residues 133–218 enclose the MEIS N-terminal domain; it reads SSDVCSSASF…PLDIVGDERA (86 aa). Disordered stretches follow at residues 214-258, 295-317, 329-359, 386-419, 491-555, and 615-661; these read GDER…PYEP, SSSS…LHST, VSSP…GNSM, SLHQ…PPPQ, VKME…KRKV, and IDQN…PDPT. Positions 219-239 are enriched in low complexity; that stretch reads SSSQPPMSPGSMGHHGHSGSP. Basic residues predominate over residues 388–400; it reads HQHHLHHPHHFPH. A compositionally biased stretch (low complexity) spans 498 to 508; sequence SVSSSKSGGKK. The span at 541-550 shows a compositional bias: polar residues; the sequence is LSDSANGSQN. The homeobox; TALE-type DNA-binding region spans 552–614; sequence KRKVPKVFSK…NARRRIVQPM (63 aa).

Belongs to the TALE/MEIS homeobox family.

It is found in the nucleus. Functionally, acts redundantly with ceh-20 and ceh-40 to perform overlapping roles during embryogenesis. Required for postembryonic development of the ectoderm, including the Q, V and P cell lineages, playing a crucial role in ensuring that these cells and their descendants undergo their invariant patterns of cell division, migration, fusion and morphogenesis. Has a role in the mig-13 pathway to promote anterior migration of neuroblasts in the Q lineage. Required for multiple roles in regulating vulva development. This is Homeobox protein unc-62 (unc-62) from Caenorhabditis briggsae.